Here is a 214-residue protein sequence, read N- to C-terminus: Alkaline phosphatase-like protein (214 aa).

A run of 4 helical transmembrane segments spans residues 3–23, 48–68, 141–161, and 177–197; these read EIIIQVMNQFGYFGVAFLIMI, LGIIGMIIAATIGSVLGALIL, FLILTTLGTLIWNIVLVSLGA, and YSSVVVAILGVIFILGLLLFV.

The protein belongs to the DedA family.

The protein localises to the cell membrane. This chain is Alkaline phosphatase-like protein (apl), found in Lactococcus lactis subsp. cremoris (strain MG1363).